The chain runs to 32 residues: Alcohol dehydrogenase-related 31 kDa protein (32 aa).

11–32 (YVADCGGIALETSXVLMTKNIA) contacts NAD(+).

Belongs to the short-chain dehydrogenases/reductases (SDR) family.

This chain is Alcohol dehydrogenase-related 31 kDa protein (Adhr), found in Drosophila yakuba (Fruit fly).